We begin with the raw amino-acid sequence, 399 residues long: Phosphoglycerate kinase (399 aa).

Substrate is bound by residues 22 to 24, R37, 60 to 63, R119, and R152; these read DLN and HFGR. ATP is bound by residues K202, E324, and 354-357; that span reads GGDT.

The protein belongs to the phosphoglycerate kinase family. In terms of assembly, monomer.

Its subcellular location is the cytoplasm. It carries out the reaction (2R)-3-phosphoglycerate + ATP = (2R)-3-phospho-glyceroyl phosphate + ADP. It participates in carbohydrate degradation; glycolysis; pyruvate from D-glyceraldehyde 3-phosphate: step 2/5. The sequence is that of Phosphoglycerate kinase from Rhizobium meliloti (strain 1021) (Ensifer meliloti).